We begin with the raw amino-acid sequence, 151 residues long: Cytochrome c-type biogenesis protein CcmE 1 (151 aa).

The Cytoplasmic portion of the chain corresponds to 1–8 (MNPLRKKR). Residues 9 to 29 (LIIILAILVGVGAAVGLALSA) form a helical; Signal-anchor for type II membrane protein membrane-spanning segment. The Periplasmic segment spans residues 30 to 151 (LQQNINLFYT…QSAPTPAKEG (122 aa)). Histidine 124 and tyrosine 128 together coordinate heme. Positions 131–151 (PEVTKALKDSGQSAPTPAKEG) are disordered.

Belongs to the CcmE/CycJ family.

Its subcellular location is the cell inner membrane. Its function is as follows. Heme chaperone required for the biogenesis of c-type cytochromes. Transiently binds heme delivered by CcmC and transfers the heme to apo-cytochromes in a process facilitated by CcmF and CcmH. In Pseudomonas fluorescens (strain Pf0-1), this protein is Cytochrome c-type biogenesis protein CcmE 1.